The primary structure comprises 476 residues: 3-isopropylmalate dehydratase large subunit (476 aa).

[4Fe-4S] cluster is bound by residues Cys-353, Cys-413, and Cys-416.

This sequence belongs to the aconitase/IPM isomerase family. LeuC type 1 subfamily. As to quaternary structure, heterodimer of LeuC and LeuD. [4Fe-4S] cluster serves as cofactor.

It carries out the reaction (2R,3S)-3-isopropylmalate = (2S)-2-isopropylmalate. It participates in amino-acid biosynthesis; L-leucine biosynthesis; L-leucine from 3-methyl-2-oxobutanoate: step 2/4. In terms of biological role, catalyzes the isomerization between 2-isopropylmalate and 3-isopropylmalate, via the formation of 2-isopropylmaleate. This Yersinia enterocolitica serotype O:8 / biotype 1B (strain NCTC 13174 / 8081) protein is 3-isopropylmalate dehydratase large subunit.